Reading from the N-terminus, the 283-residue chain is Bifunctional protein FolD (283 aa).

NADP(+)-binding positions include 165–167 (GRS) and Ser190.

It belongs to the tetrahydrofolate dehydrogenase/cyclohydrolase family. Homodimer.

The enzyme catalyses (6R)-5,10-methylene-5,6,7,8-tetrahydrofolate + NADP(+) = (6R)-5,10-methenyltetrahydrofolate + NADPH. The catalysed reaction is (6R)-5,10-methenyltetrahydrofolate + H2O = (6R)-10-formyltetrahydrofolate + H(+). It functions in the pathway one-carbon metabolism; tetrahydrofolate interconversion. Its function is as follows. Catalyzes the oxidation of 5,10-methylenetetrahydrofolate to 5,10-methenyltetrahydrofolate and then the hydrolysis of 5,10-methenyltetrahydrofolate to 10-formyltetrahydrofolate. The protein is Bifunctional protein FolD of Paracidovorax citrulli (strain AAC00-1) (Acidovorax citrulli).